We begin with the raw amino-acid sequence, 369 residues long: Protein HGH1 homolog (369 aa).

The protein belongs to the HGH1 family.

The polypeptide is Protein HGH1 homolog (Drosophila melanogaster (Fruit fly)).